A 307-amino-acid chain; its full sequence is Metapyrocatechase (307 aa).

2 VOC domains span residues 7–122 and 150–269; these read RPGH…LYAD and RFDH…VFCG. Fe cation-binding residues include His153, His214, and Glu265.

It belongs to the extradiol ring-cleavage dioxygenase family. Homotetramer. The cofactor is Fe(2+).

It catalyses the reaction catechol + O2 = (2Z,4E)-2-hydroxy-6-oxohexa-2,4-dienoate + H(+). The protein operates within xenobiotic degradation; toluene degradation. This is Metapyrocatechase (xylE) from Pseudomonas putida (Arthrobacter siderocapsulatus).